A 54-amino-acid polypeptide reads, in one-letter code: Apelin receptor early endogenous ligand (54 aa).

The N-terminal stretch at 1-25 (MRFQPLFWVFFIFAMSLLFITEEKS) is a signal peptide.

The protein belongs to the Elabela/Toddler family. Interacts with APLNR.

It localises to the secreted. The protein localises to the extracellular space. In terms of biological role, peptide hormone that functions as endogenous ligand for the G-protein-coupled apelin receptor (APLNR/APJ), that plays a role in the regulation of normal cardiovascular function and fluid homeostasis. Functions as a balanced agonist activating both G(i) protein pathway and beta-arrestin pathway of APLNR. Downstream G proteins activation, apelin can inhibit cAMP production and activate key intracellular effectors such as ERKs. On the other hand, APLNR activation induces beta-arrestin recruitment to the membrane leading to desensitization and internalization of the receptor. Required for mesendodermal differentiation, blood vessels formation and heart morphogenesis during early development and for adult cardiovascular homeostasis. Acts as a motogen by promoting mesendodermal cell migration during gastrulation by binding and activating APLNR. Acts as an early embryonic regulator of cellular movement with a role in migration and development of cardiac progenitor cells. May act as a chemoattractant for the activation of angioblast migration toward the embryonic midline, i.e. the position of the future vessel formation, during vasculogenesis. Positively regulates sinus venosus (SV)-derived endothelial cells migration into the developing heart to promote coronary blood vessel sprouting. Plays a role in placental vascular development; promotes placental trophoblast invasion and spiral artery remodeling in the uterus. Involved in the regulation of maternal cardiovascular homeostasis to prevent gestational hypertension and for potent cardioprotective functions during heart failure. Mediates myocardial contractility in an ERK1/2-dependent manner. The sequence is that of Apelin receptor early endogenous ligand from Rattus norvegicus (Rat).